A 483-amino-acid chain; its full sequence is Membrane-bound lytic murein transglycosylase F (483 aa).

The signal sequence occupies residues 1–18 (MKGLIARFIAGFALLLWA). The segment at 19–267 (WDMVFPWQQL…RIEEKYFNHL (249 aa)) is non-LT domain. Residues 269 to 483 (HFDYVDIQSY…SKESDSTLKE (215 aa)) are LT domain. E312 is a catalytic residue. The interval 458–483 (QQIQNNEEQPSVPQEISKESDSTLKE) is disordered. Basic and acidic residues predominate over residues 473 to 483 (ISKESDSTLKE).

This sequence in the N-terminal section; belongs to the bacterial solute-binding protein 3 family. The protein in the C-terminal section; belongs to the transglycosylase Slt family.

It localises to the cell outer membrane. The catalysed reaction is Exolytic cleavage of the (1-&gt;4)-beta-glycosidic linkage between N-acetylmuramic acid (MurNAc) and N-acetylglucosamine (GlcNAc) residues in peptidoglycan, from either the reducing or the non-reducing ends of the peptidoglycan chains, with concomitant formation of a 1,6-anhydrobond in the MurNAc residue.. In terms of biological role, murein-degrading enzyme that degrades murein glycan strands and insoluble, high-molecular weight murein sacculi, with the concomitant formation of a 1,6-anhydromuramoyl product. Lytic transglycosylases (LTs) play an integral role in the metabolism of the peptidoglycan (PG) sacculus. Their lytic action creates space within the PG sacculus to allow for its expansion as well as for the insertion of various structures such as secretion systems and flagella. This chain is Membrane-bound lytic murein transglycosylase F, found in Actinobacillus pleuropneumoniae serotype 3 (strain JL03).